Here is an 806-residue protein sequence, read N- to C-terminus: Leucine--tRNA ligase (806 aa).

Residues 40-51 (PYPSGAGLHVGH) carry the 'HIGH' region motif. A 'KMSKS' region motif is present at residues 576–580 (KMSKS). ATP is bound at residue K579.

This sequence belongs to the class-I aminoacyl-tRNA synthetase family.

It localises to the cytoplasm. The catalysed reaction is tRNA(Leu) + L-leucine + ATP = L-leucyl-tRNA(Leu) + AMP + diphosphate. This chain is Leucine--tRNA ligase, found in Halalkalibacterium halodurans (strain ATCC BAA-125 / DSM 18197 / FERM 7344 / JCM 9153 / C-125) (Bacillus halodurans).